We begin with the raw amino-acid sequence, 542 residues long: Glucose-6-phosphate isomerase 2 (542 aa).

E353 (proton donor) is an active-site residue. Active-site residues include H384 and K505.

This sequence belongs to the GPI family.

The protein localises to the cytoplasm. The enzyme catalyses alpha-D-glucose 6-phosphate = beta-D-fructose 6-phosphate. It functions in the pathway carbohydrate biosynthesis; gluconeogenesis. It participates in carbohydrate degradation; glycolysis; D-glyceraldehyde 3-phosphate and glycerone phosphate from D-glucose: step 2/4. Functionally, catalyzes the reversible isomerization of glucose-6-phosphate to fructose-6-phosphate. In Cupriavidus pinatubonensis (strain JMP 134 / LMG 1197) (Cupriavidus necator (strain JMP 134)), this protein is Glucose-6-phosphate isomerase 2.